The following is a 237-amino-acid chain: V-type proton ATPase subunit E (237 aa).

It belongs to the V-ATPase E subunit family. In terms of assembly, V-ATPase is a heteromultimeric enzyme composed of a peripheral catalytic V1 complex (components A to H) attached to an integral membrane V0 proton pore complex (components: a, c, c', c'' and d).

Its function is as follows. Subunit of the peripheral V1 complex of vacuolar ATPase essential for assembly or catalytic function. V-ATPase is responsible for acidifying a variety of intracellular compartments in eukaryotic cells. This is V-type proton ATPase subunit E (VATE) from Gossypium hirsutum (Upland cotton).